A 406-amino-acid chain; its full sequence is Cysteine desulfurase (406 aa).

Position 226 is an N6-(pyridoxal phosphate)lysine (lysine 226). Catalysis depends on cysteine 364, which acts as the Cysteine persulfide intermediate.

The protein belongs to the class-V pyridoxal-phosphate-dependent aminotransferase family. Csd subfamily. As to quaternary structure, homodimer. Interacts with SufE and the SufBCD complex composed of SufB, SufC and SufD. The interaction with SufE is required to mediate the direct transfer of the sulfur atom from the S-sulfanylcysteine. Requires pyridoxal 5'-phosphate as cofactor.

The protein resides in the cytoplasm. The enzyme catalyses (sulfur carrier)-H + L-cysteine = (sulfur carrier)-SH + L-alanine. It catalyses the reaction L-selenocysteine + AH2 = hydrogenselenide + L-alanine + A + H(+). The protein operates within cofactor biosynthesis; iron-sulfur cluster biosynthesis. In terms of biological role, cysteine desulfurases mobilize the sulfur from L-cysteine to yield L-alanine, an essential step in sulfur metabolism for biosynthesis of a variety of sulfur-containing biomolecules. Component of the suf operon, which is activated and required under specific conditions such as oxidative stress and iron limitation. Acts as a potent selenocysteine lyase in vitro, that mobilizes selenium from L-selenocysteine. Selenocysteine lyase activity is however unsure in vivo. This Klebsiella pneumoniae (strain 342) protein is Cysteine desulfurase.